The following is a 305-amino-acid chain: Putative UDP-glucose 4-epimerase (305 aa).

NAD(+) is bound by residues 10–11, 30–35, 50–51, and 71–75; these read FI, DNLTTG, DI, and QAAQI. Substrate is bound by residues serine 115 and tyrosine 140. Positions 140 and 144 each coordinate NAD(+). Tyrosine 140 functions as the Proton acceptor in the catalytic mechanism. Substrate-binding positions include asparagine 169, 183-184, 198-200, arginine 207, and 263-266; these read VI, IIF, and REGE.

This sequence belongs to the NAD(P)-dependent epimerase/dehydratase family. NAD(+) is required as a cofactor.

The enzyme catalyses UDP-alpha-D-glucose = UDP-alpha-D-galactose. Its pathway is carbohydrate metabolism; galactose metabolism. Involved in the metabolism of galactose. Catalyzes the conversion of UDP-galactose (UDP-Gal) to UDP-glucose (UDP-Glc) through a mechanism involving the transient reduction of NAD. This chain is Putative UDP-glucose 4-epimerase, found in Methanocaldococcus jannaschii (strain ATCC 43067 / DSM 2661 / JAL-1 / JCM 10045 / NBRC 100440) (Methanococcus jannaschii).